Reading from the N-terminus, the 154-residue chain is Phospholipase A2 OS1 (154 aa).

The N-terminal stretch at 1–27 is a signal peptide; the sequence is MHPAHLLVLLAVCVSLLGAARIPPLPL. 7 disulfides stabilise this stretch: Cys38-Cys104, Cys54-Cys153, Cys56-Cys72, Cys71-Cys132, Cys78-Cys125, Cys88-Cys118, and Cys111-Cys123. 2 residues coordinate Ca(2+): Gly57 and Gly59. Residue His75 is part of the active site. A Ca(2+)-binding site is contributed by Asp76. Asp126 is an active-site residue.

Belongs to the phospholipase A2 family. Group I subfamily. D49 sub-subfamily. As to quaternary structure, monomer. Requires Ca(2+) as cofactor. As to expression, expressed by the venom gland.

Its subcellular location is the secreted. The enzyme catalyses a 1,2-diacyl-sn-glycero-3-phosphocholine + H2O = a 1-acyl-sn-glycero-3-phosphocholine + a fatty acid + H(+). Functionally, snake venom phospholipase A2 (PLA2) that has a low specific activity on phospholipid substrates, and is neither neurotoxic, nor myotoxic. Induces endothelial cell migration which is mediated, at least in part, by its hydrolytic products. Shows antimalarial activity, but is not able to potently inhibit HIV-1 replication. Binds in a calcium-independent fashion with very high affinity to a muscle-type (M-type) PLA2 receptor, but is a very poor ligand for neuronal-type (N-type) receptors. PLA2 catalyzes the calcium-dependent hydrolysis of the 2-acyl groups in 3-sn-phosphoglycerides. This Oxyuranus scutellatus scutellatus (Australian taipan) protein is Phospholipase A2 OS1.